The chain runs to 112 residues: Macrodomain Ori protein (112 aa).

Positions 91–112 are disordered; that stretch reads FHTLSGGKPQVEGAEDYTDSDD. Residues 103–112 show a composition bias toward acidic residues; it reads GAEDYTDSDD.

It belongs to the MaoP family.

Its function is as follows. Involved in the organization of the Ori region of the chromosome into a macrodomain (MD). It constrains DNA mobility in the Ori macrodomain and limits long-distance DNA interactions with other chromosomal regions. The chain is Macrodomain Ori protein from Escherichia coli O157:H7.